The sequence spans 430 residues: Enolase (430 aa).

(2R)-2-phosphoglycerate is bound at residue Gln167. Glu209 serves as the catalytic Proton donor. Mg(2+) is bound by residues Asp246, Glu287, and Asp314. (2R)-2-phosphoglycerate contacts are provided by Lys339, Arg368, Ser369, and Lys390. The active-site Proton acceptor is Lys339.

This sequence belongs to the enolase family. It depends on Mg(2+) as a cofactor.

It localises to the cytoplasm. The protein resides in the secreted. The protein localises to the cell surface. It carries out the reaction (2R)-2-phosphoglycerate = phosphoenolpyruvate + H2O. It functions in the pathway carbohydrate degradation; glycolysis; pyruvate from D-glyceraldehyde 3-phosphate: step 4/5. In terms of biological role, catalyzes the reversible conversion of 2-phosphoglycerate (2-PG) into phosphoenolpyruvate (PEP). It is essential for the degradation of carbohydrates via glycolysis. The chain is Enolase from Prochlorococcus marinus (strain MIT 9301).